An 804-amino-acid polypeptide reads, in one-letter code: Phenylalanine--tRNA ligase beta subunit (804 aa).

The 114-residue stretch at 40–153 (PLPDLRVVVG…SSYAVGEPFA (114 aa)) folds into the tRNA-binding domain. One can recognise a B5 domain in the interval 400-476 (PALLVLPFRP…RLHGYDNIEA (77 aa)). 4 residues coordinate Mg(2+): Asp454, Asp460, Glu463, and Glu464. Residues 710 to 802 (SKFPAVQRDL…AESKLGAVIR (93 aa)) enclose the FDX-ACB domain.

The protein belongs to the phenylalanyl-tRNA synthetase beta subunit family. Type 1 subfamily. As to quaternary structure, tetramer of two alpha and two beta subunits. Requires Mg(2+) as cofactor.

The protein localises to the cytoplasm. The enzyme catalyses tRNA(Phe) + L-phenylalanine + ATP = L-phenylalanyl-tRNA(Phe) + AMP + diphosphate + H(+). This chain is Phenylalanine--tRNA ligase beta subunit, found in Chlorobium luteolum (strain DSM 273 / BCRC 81028 / 2530) (Pelodictyon luteolum).